A 173-amino-acid polypeptide reads, in one-letter code: Alpha-crystallin A chain (173 aa).

An N-acetylmethionine modification is found at M1. Residues 53–164 enclose the sHSP domain; that stretch reads NFLDSSNSGM…GDRSIPVTRD (112 aa). Zn(2+) contacts are provided by H101, E103, and H108. A disulfide bridge connects residues C132 and C143. The segment at 143–173 is disordered; sequence CGPKSGGSESGRGDRSIPVTRDDKTNSTPSS. The span at 153-167 shows a compositional bias: basic and acidic residues; sequence GRGDRSIPVTRDDKT.

It belongs to the small heat shock protein (HSP20) family. As to quaternary structure, heteropolymer composed of three CRYAA and one CRYAB subunits. Inter-subunit bridging via zinc ions enhances stability, which is crucial as there is no protein turn over in the lens. Zinc coordination is achieved at least by His-101, Glu-103 and His-108. His-101 and Glu-103 come from the same molecule within the oligomer, while His-108 residue is provided by another molecule. Can also form homodimers and homotetramers (dimers of dimers) which serve as the building blocks of homooligomers. Part of a complex required for lens intermediate filament formation composed of BFSP1, BFSP2 and CRYAA.

Its subcellular location is the cytoplasm. It localises to the nucleus. Its function is as follows. Contributes to the transparency and refractive index of the lens. May act as a chaperone, preventing aggregation of various proteins under a wide range of stress conditions. The sequence is that of Alpha-crystallin A chain (cryaa) from Psalidodon fasciatus (Banded astyanax).